A 217-amino-acid chain; its full sequence is NADH dehydrogenase (ubiquinone) 23 kDa subunit (217 aa).

A mitochondrion-targeting transit peptide spans 1–26 (MSLTMRIFTASRNGQRLFGSHGARLL). 4Fe-4S ferredoxin-type domains lie at 109 to 138 (RRYP…IEAE) and 148 to 177 (TRYD…EGPN). [4Fe-4S] cluster is bound by residues Cys-118, Cys-121, Cys-124, Cys-128, Cys-157, Cys-160, Cys-163, and Cys-167.

The protein belongs to the complex I 23 kDa subunit family. Part of the mitochondrial membrane respiratory chain NADH dehydrogenase (Complex I). This is a component of the iron-sulfur (IP) fragment of the enzyme. Requires [4Fe-4S] cluster as cofactor. In terms of tissue distribution, expressed in muscles (at protein level).

The protein resides in the mitochondrion. The catalysed reaction is a ubiquinone + NADH + 5 H(+)(in) = a ubiquinol + NAD(+) + 4 H(+)(out). Functionally, core subunit of the mitochondrial membrane respiratory chain NADH dehydrogenase (Complex I) that is believed to belong to the minimal assembly required for catalysis. Complex I functions in the transfer of electrons from NADH to the respiratory chain. The immediate electron acceptor for the enzyme is believed to be ubiquinone. This Drosophila melanogaster (Fruit fly) protein is NADH dehydrogenase (ubiquinone) 23 kDa subunit.